The chain runs to 877 residues: Leucine--tRNA ligase (877 aa).

A 'HIGH' region motif is present at residues proline 43–histidine 53. Residues lysine 628–serine 632 carry the 'KMSKS' region motif. ATP is bound at residue lysine 631.

Belongs to the class-I aminoacyl-tRNA synthetase family.

It is found in the cytoplasm. It carries out the reaction tRNA(Leu) + L-leucine + ATP = L-leucyl-tRNA(Leu) + AMP + diphosphate. In Brucella abortus biovar 1 (strain 9-941), this protein is Leucine--tRNA ligase.